The following is a 443-amino-acid chain: Thymidine phosphorylase (443 aa).

The protein belongs to the thymidine/pyrimidine-nucleoside phosphorylase family. As to quaternary structure, homodimer.

The catalysed reaction is thymidine + phosphate = 2-deoxy-alpha-D-ribose 1-phosphate + thymine. It participates in pyrimidine metabolism; dTMP biosynthesis via salvage pathway; dTMP from thymine: step 1/2. Functionally, the enzymes which catalyze the reversible phosphorolysis of pyrimidine nucleosides are involved in the degradation of these compounds and in their utilization as carbon and energy sources, or in the rescue of pyrimidine bases for nucleotide synthesis. This is Thymidine phosphorylase from Sodalis glossinidius (strain morsitans).